The primary structure comprises 141 residues: Large ribosomal subunit protein uL11 (141 aa).

This sequence belongs to the universal ribosomal protein uL11 family. In terms of assembly, part of the ribosomal stalk of the 50S ribosomal subunit. Interacts with L10 and the large rRNA to form the base of the stalk. L10 forms an elongated spine to which L12 dimers bind in a sequential fashion forming a multimeric L10(L12)X complex. One or more lysine residues are methylated.

In terms of biological role, forms part of the ribosomal stalk which helps the ribosome interact with GTP-bound translation factors. This is Large ribosomal subunit protein uL11 from Parasynechococcus marenigrum (strain WH8102).